A 469-amino-acid polypeptide reads, in one-letter code: Nuclear hormone receptor family member nhr-154 (469 aa).

Residues 80–159 (PSKCLVCRNP…VGMNPMAIQA (80 aa)) constitute a DNA-binding region (nuclear receptor). 2 consecutive NR C4-type zinc fingers follow at residues 83–103 (CLVCRNPAIGYHYDVPSCNGC) and 119–142 (CAKQKKCMDGTEPVDMSKRLCRAC). One can recognise an NR LBD domain in the interval 230–459 (LDSKPVLVVT…KMGTTFRKCI (230 aa)).

The protein belongs to the nuclear hormone receptor family.

The protein resides in the nucleus. In terms of biological role, orphan nuclear receptor. This Caenorhabditis elegans protein is Nuclear hormone receptor family member nhr-154 (nhr-154).